The sequence spans 230 residues: Ribonuclease 3 (230 aa).

The RNase III domain maps to 5–134 (EALLENSFNI…FLGALLLDKG (130 aa)). E47 serves as a coordination point for Mg(2+). D51 is a catalytic residue. The Mg(2+) site is built by D120 and E123. E123 is an active-site residue. One can recognise a DRBM domain in the interval 160–229 (DYKTCLQELL…AKNALAQLSE (70 aa)).

This sequence belongs to the ribonuclease III family. In terms of assembly, homodimer. It depends on Mg(2+) as a cofactor.

It localises to the cytoplasm. It catalyses the reaction Endonucleolytic cleavage to 5'-phosphomonoester.. Its function is as follows. Digests double-stranded RNA. Involved in the processing of primary rRNA transcript to yield the immediate precursors to the large and small rRNAs (23S and 16S). Processes some mRNAs, and tRNAs when they are encoded in the rRNA operon. Processes pre-crRNA and tracrRNA of type II CRISPR loci if present in the organism. In Streptococcus equi subsp. zooepidemicus (strain H70), this protein is Ribonuclease 3.